The sequence spans 272 residues: Putative pyruvate, phosphate dikinase regulatory protein (272 aa).

149–156 (GVSRTSKT) lines the ADP pocket.

This sequence belongs to the pyruvate, phosphate/water dikinase regulatory protein family. PDRP subfamily.

It catalyses the reaction N(tele)-phospho-L-histidyl/L-threonyl-[pyruvate, phosphate dikinase] + ADP = N(tele)-phospho-L-histidyl/O-phospho-L-threonyl-[pyruvate, phosphate dikinase] + AMP + H(+). The enzyme catalyses N(tele)-phospho-L-histidyl/O-phospho-L-threonyl-[pyruvate, phosphate dikinase] + phosphate + H(+) = N(tele)-phospho-L-histidyl/L-threonyl-[pyruvate, phosphate dikinase] + diphosphate. Bifunctional serine/threonine kinase and phosphorylase involved in the regulation of the pyruvate, phosphate dikinase (PPDK) by catalyzing its phosphorylation/dephosphorylation. The chain is Putative pyruvate, phosphate dikinase regulatory protein from Lactiplantibacillus plantarum (strain ATCC BAA-793 / NCIMB 8826 / WCFS1) (Lactobacillus plantarum).